The following is a 274-amino-acid chain: ATP synthase subunit delta (274 aa).

Belongs to the ATPase delta chain family. F-type ATPases have 2 components, F(1) - the catalytic core - and F(0) - the membrane proton channel. F(1) has five subunits: alpha(3), beta(3), gamma(1), delta(1), epsilon(1). F(0) has three main subunits: a(1), b(2) and c(10-14). The alpha and beta chains form an alternating ring which encloses part of the gamma chain. F(1) is attached to F(0) by a central stalk formed by the gamma and epsilon chains, while a peripheral stalk is formed by the delta and b chains.

Its subcellular location is the cell membrane. Functionally, f(1)F(0) ATP synthase produces ATP from ADP in the presence of a proton or sodium gradient. F-type ATPases consist of two structural domains, F(1) containing the extramembraneous catalytic core and F(0) containing the membrane proton channel, linked together by a central stalk and a peripheral stalk. During catalysis, ATP synthesis in the catalytic domain of F(1) is coupled via a rotary mechanism of the central stalk subunits to proton translocation. In terms of biological role, this protein is part of the stalk that links CF(0) to CF(1). It either transmits conformational changes from CF(0) to CF(1) or is implicated in proton conduction. This chain is ATP synthase subunit delta, found in Acidothermus cellulolyticus (strain ATCC 43068 / DSM 8971 / 11B).